Reading from the N-terminus, the 216-residue chain is Small ribosomal subunit protein uS3 (216 aa).

A KH type-2 domain is found at 38-106; that stretch reads LRKMLKDKLY…QANIEIKEVR (69 aa).

Belongs to the universal ribosomal protein uS3 family. In terms of assembly, part of the 30S ribosomal subunit. Forms a tight complex with proteins S10 and S14.

Binds the lower part of the 30S subunit head. Binds mRNA in the 70S ribosome, positioning it for translation. The polypeptide is Small ribosomal subunit protein uS3 (Thermodesulfovibrio yellowstonii (strain ATCC 51303 / DSM 11347 / YP87)).